A 358-amino-acid chain; its full sequence is 3-dehydroquinate synthase (358 aa).

NAD(+) is bound by residues 69 to 74 (DGEQYK), 103 to 107 (GVIGD), 127 to 128 (TT), Lys-140, Lys-149, and 167 to 170 (TLNT). The Zn(2+) site is built by Glu-182, His-245, and His-262.

Belongs to the sugar phosphate cyclases superfamily. Dehydroquinate synthase family. Requires Co(2+) as cofactor. The cofactor is Zn(2+). It depends on NAD(+) as a cofactor.

Its subcellular location is the cytoplasm. The enzyme catalyses 7-phospho-2-dehydro-3-deoxy-D-arabino-heptonate = 3-dehydroquinate + phosphate. It functions in the pathway metabolic intermediate biosynthesis; chorismate biosynthesis; chorismate from D-erythrose 4-phosphate and phosphoenolpyruvate: step 2/7. Catalyzes the conversion of 3-deoxy-D-arabino-heptulosonate 7-phosphate (DAHP) to dehydroquinate (DHQ). The chain is 3-dehydroquinate synthase from Hydrogenovibrio crunogenus (strain DSM 25203 / XCL-2) (Thiomicrospira crunogena).